Consider the following 461-residue polypeptide: Photosystem II CP43 reaction center protein (461 aa).

A propeptide spanning residues 1–2 is cleaved from the precursor; that stretch reads ME. At threonine 3 the chain carries N-acetylthreonine. Threonine 3 is modified (phosphothreonine). The next 5 helical transmembrane spans lie at 57 to 81, 122 to 143, 166 to 188, 243 to 263, and 279 to 300; these read LFEV…PHLA, LIGP…KDKN, KALY…RIIT, QPWA…LSYS, and WFNN…ASQS. Glutamate 355 lines the [CaMn4O5] cluster pocket. The chain crosses the membrane as a helical span at residues 435–459; it reads RARAAAAGFEKGIDRFNEPTLSLRP.

The protein belongs to the PsbB/PsbC family. PsbC subfamily. PSII is composed of 1 copy each of membrane proteins PsbA, PsbB, PsbC, PsbD, PsbE, PsbF, PsbH, PsbI, PsbJ, PsbK, PsbL, PsbM, PsbT, PsbX, PsbY, PsbZ, Psb30/Ycf12, at least 3 peripheral proteins of the oxygen-evolving complex and a large number of cofactors. It forms dimeric complexes. Requires Binds multiple chlorophylls and provides some of the ligands for the Ca-4Mn-5O cluster of the oxygen-evolving complex. It may also provide a ligand for a Cl- that is required for oxygen evolution. PSII binds additional chlorophylls, carotenoids and specific lipids. as cofactor.

Its subcellular location is the plastid. It localises to the chloroplast thylakoid membrane. In terms of biological role, one of the components of the core complex of photosystem II (PSII). It binds chlorophyll and helps catalyze the primary light-induced photochemical processes of PSII. PSII is a light-driven water:plastoquinone oxidoreductase, using light energy to abstract electrons from H(2)O, generating O(2) and a proton gradient subsequently used for ATP formation. The polypeptide is Photosystem II CP43 reaction center protein (Oedogonium cardiacum (Filamentous green alga)).